The primary structure comprises 125 residues: Large ribosomal subunit protein bL12 (125 aa).

Belongs to the bacterial ribosomal protein bL12 family. Homodimer. Part of the 50S ribosomal subunit; present in 6 copies per ribosome. Forms part of the ribosomal stalk which helps the ribosome interact with GTP-bound translation factors. Forms a heptameric L10(L12)2(L12)2(L12)2 complex, where L10 forms an elongated spine to which 3 L12 dimers bind in a sequential fashion.

Functionally, forms part of the ribosomal stalk which helps the ribosome interact with GTP-bound translation factors. Is thus essential for accurate translation. This Agrobacterium fabrum (strain C58 / ATCC 33970) (Agrobacterium tumefaciens (strain C58)) protein is Large ribosomal subunit protein bL12.